Reading from the N-terminus, the 669-residue chain is Phosphatidylinositol-3-phosphate phosphatase MTMR1 (669 aa).

Methionine 1 carries the post-translational modification N-acetylmethionine. A compositionally biased stretch (low complexity) spans 1–17 (MDRPVAAAAAASAASCE). The tract at residues 1 to 55 (MDRPVAAAAAASAASCEGAGGPGPGPGASWRPSRVAGGASASSRHPSIETLDSPT) is disordered. Residues serine 47 and serine 53 each carry the phosphoserine modification. Residues 94–165 (NKLAQMEEAP…GVISRVEKIG (72 aa)) enclose the GRAM domain. Positions 230–605 (GWKVYDPVSE…SHLELWVNYY (376 aa)) constitute a Myotubularin phosphatase domain. Residues asparagine 355, asparagine 380, and isoleucine 381 each coordinate a 1,2-diacyl-sn-glycero-3-phospho-(1D-myo-inositol-3-phosphate). Catalysis depends on cysteine 442, which acts as the Phosphocysteine intermediate. A 1,2-diacyl-sn-glycero-3-phospho-(1D-myo-inositol-3-phosphate) is bound by residues serine 443, aspartate 444, glycine 445, tryptophan 446, aspartate 447, arginine 448, and arginine 488. Serine 443 is a phosphate binding site. Phosphate-binding residues include glycine 445, tryptophan 446, aspartate 447, and arginine 448. Positions 612-669 (MRPQMPIHQNLKELLAIKAELQKRVEDLQREMATRTISSSSERGSSPTHSATPVHTSV) are required for dimerization. The disordered stretch occupies residues 644-669 (ATRTISSSSERGSSPTHSATPVHTSV). The segment covering 649–661 (SSSSERGSSPTHS) has biased composition (low complexity).

It belongs to the protein-tyrosine phosphatase family. Non-receptor class myotubularin subfamily. As to quaternary structure, homodimer. As to expression, widely expressed. Detected in skeletal muscle, heart, lung, liver and brain.

It localises to the cell membrane. The protein resides in the cytoplasm. The enzyme catalyses a 1,2-diacyl-sn-glycero-3-phospho-(1D-myo-inositol-3-phosphate) + H2O = a 1,2-diacyl-sn-glycero-3-phospho-(1D-myo-inositol) + phosphate. It catalyses the reaction 1,2-dioctanoyl-sn-glycero-3-phospho-(1-D-myo-inositol-3-phosphate) + H2O = 1,2-dioctanoyl-sn-glycero-3-phospho-(1D-myo-inositol) + phosphate. The catalysed reaction is a 1,2-diacyl-sn-glycero-3-phospho-(1D-myo-inositol-3,5-bisphosphate) + H2O = a 1,2-diacyl-sn-glycero-3-phospho-(1D-myo-inositol-5-phosphate) + phosphate. Lipid phosphatase that specifically dephosphorylates the D-3 position of phosphatidylinositol 3-phosphate, generating phosphatidylinositol. Could also dephosphorylate phosphatidylinositol 3,5-bisphosphate to produce phosphatidylinositol 5-phosphate. The chain is Phosphatidylinositol-3-phosphate phosphatase MTMR1 from Mus musculus (Mouse).